The primary structure comprises 517 residues: Beta-glucosidase 17 (517 aa).

Positions 1-23 (MAIKSIFIIIIISIITSISELYA) are cleaved as a signal peptide. A beta-D-glucoside is bound by residues Gln54, His158, and 203 to 204 (NE). Glu204 serves as the catalytic Proton donor. A disulfide bridge connects residues Cys223 and Cys230. The N-linked (GlcNAc...) asparagine glycan is linked to Asn229. Tyr346 provides a ligand contact to a beta-D-glucoside. N-linked (GlcNAc...) asparagine glycosylation is found at Asn361 and Asn371. A beta-D-glucoside contacts are provided by residues Glu417, Trp466, 473–474 (EW), and Tyr482. Glu417 functions as the Nucleophile in the catalytic mechanism. Asn510 carries N-linked (GlcNAc...) asparagine glycosylation.

This sequence belongs to the glycosyl hydrolase 1 family.

It carries out the reaction Hydrolysis of terminal, non-reducing beta-D-glucosyl residues with release of beta-D-glucose.. The polypeptide is Beta-glucosidase 17 (Arabidopsis thaliana (Mouse-ear cress)).